Here is a 126-residue protein sequence, read N- to C-terminus: Fluoride-specific ion channel FluC (126 aa).

The next 4 membrane-spanning stretches (helical) occupy residues 6–26 (FVAVGVGAALGAWLRWAFAVL), 36–56 (YGTLAANLLGGYLIGVAVGFF), 68–88 (LLAVTGFLGGLTTFSTFSSEV), and 99–119 (IGMLHVAAHLGGSLFLTMLGL). Na(+) contacts are provided by G76 and T79.

This sequence belongs to the fluoride channel Fluc/FEX (TC 1.A.43) family.

The protein localises to the cell inner membrane. The enzyme catalyses fluoride(in) = fluoride(out). Its activity is regulated as follows. Na(+) is not transported, but it plays an essential structural role and its presence is essential for fluoride channel function. Functionally, fluoride-specific ion channel. Important for reducing fluoride concentration in the cell, thus reducing its toxicity. This is Fluoride-specific ion channel FluC from Ralstonia nicotianae (strain ATCC BAA-1114 / GMI1000) (Ralstonia solanacearum).